Consider the following 505-residue polypeptide: Putative pentatricopeptide repeat-containing protein At1g26500 (505 aa).

7 PPR repeats span residues Asn-145–Tyr-179, Asn-180–Phe-210, Asp-214–Val-248, Asp-249–Lys-279, Asp-285–Val-319, Asp-320–Pro-350, and Asp-351–Pro-385.

This sequence belongs to the PPR family. P subfamily.

This Arabidopsis thaliana (Mouse-ear cress) protein is Putative pentatricopeptide repeat-containing protein At1g26500.